A 364-amino-acid polypeptide reads, in one-letter code: MTRMLPEPAYRHGSVGKIGVLMINLGTPDAPTAKALRAYLKQFLSEPRIVEFPRWLWWFILNGIILNVRPAKSAKKYEQIWTSEGSPLRVHTARQTALVAALLEQQADSSLVVEYAMIIGNPSIAEKLQQMKVQGCDRILVLPLFPQYAASSTGCVLDGVFSELRKMRNIPDIRTVRHYHDDPGYIAALAQNVRDYWEKHGQPDKLIISFHGVPRKTLEMGDPYHCECQKTGRLLAEALELADDRYQICFQSRFGFAQWLGPYTAEILAELGKQKTGRVDVVCPGFVSDCLETLEEIALEGKAIFTEAGGGEFHYIPSLNEHPLWIEAIGNIIQTHLTGWADRRLSEEAAERSRKRALALGARE.

The Fe cation site is built by histidine 211 and glutamate 292.

This sequence belongs to the ferrochelatase family.

The protein localises to the cytoplasm. The enzyme catalyses heme b + 2 H(+) = protoporphyrin IX + Fe(2+). The protein operates within porphyrin-containing compound metabolism; protoheme biosynthesis; protoheme from protoporphyrin-IX: step 1/1. Its function is as follows. Catalyzes the ferrous insertion into protoporphyrin IX. The protein is Ferrochelatase of Nitrosomonas europaea (strain ATCC 19718 / CIP 103999 / KCTC 2705 / NBRC 14298).